We begin with the raw amino-acid sequence, 439 residues long: Probable RNA-binding protein 23 (439 aa).

Positions 13–159 (MLEAPYKKEE…PVREPVDNLS (147 aa)) are disordered. Positions 17-34 (PYKKEEDEQQRKEVKKDY) are enriched in basic and acidic residues. Residues 36-57 (SNTTSSTSNSGNETSGSSTIGE) are compositionally biased toward low complexity. Residues 60–90 (KKKRSRSHNKSRDRKRSRSRDRDRYRRRNSR) are compositionally biased toward basic residues. Over residues 103–125 (RSWDRRHGSESRSRDHRREDRVH) the composition is skewed to basic and acidic residues. Residues Ser-128 and Ser-149 each carry the phosphoserine modification. Positions 144–159 (HFREKSPVREPVDNLS) are enriched in basic and acidic residues. RRM domains lie at 166 to 243 (RTVF…ASQA) and 263 to 341 (MRLY…HVTE).

Belongs to the splicing factor SR family. Aryl sulfonamide anticancer drugs, such as indisulam (E7070) or E7820, promote ubiquitination and subsequent degradation by the DCX(DCAF15) complex. Aryl sulfonamide anticancer drugs change the substrate specificity of DCAF15 by acting as a molecular glue that promotes binding between DCAF15 and weak affinity interactor RBM23. As to expression, highly expressed in placenta, liver, skeletal muscle, heart and kidney. Expressed at lower levels in the colon, thymus, spleen, small intestine and lung.

It localises to the nucleus. RNA-binding protein that acts both as a transcription coactivator and pre-mRNA splicing factor. Regulates steroid hormone receptor-mediated transcription, independently of the pre-mRNA splicing factor activity. This is Probable RNA-binding protein 23 from Homo sapiens (Human).